A 144-amino-acid chain; its full sequence is MRLNSLRPAAGSRPDANRVGRGAGTGNGKTAGRGHKGQHSRSGGFTKVGFEGGQMPLQRRVPKVGFRSRKALTRAEVRLSELNKVEGDTVDLLTLKQAGIINRGVRTAKVIASGKVERAVTVQGLAVTKGAREAIEAAGGKVEA.

The segment at 1–60 (MRLNSLRPAAGSRPDANRVGRGAGTGNGKTAGRGHKGQHSRSGGFTKVGFEGGQMPLQRR) is disordered. Gly residues predominate over residues 21-31 (RGAGTGNGKTA).

The protein belongs to the universal ribosomal protein uL15 family. Part of the 50S ribosomal subunit.

Binds to the 23S rRNA. This Alkalilimnicola ehrlichii (strain ATCC BAA-1101 / DSM 17681 / MLHE-1) protein is Large ribosomal subunit protein uL15.